Here is a 216-residue protein sequence, read N- to C-terminus: Proenkephalin-A-B (216 aa).

Propeptides lie at residues 64-85 (MDEL…LAKN), 93-131 (EYDS…GEMN), 144-155 (STDLEDETRGIQ), 165-175 (VGRPEWWQDYQ), and 183-207 (TRFT…PDME). The disordered stretch occupies residues 114-133 (PESAIYHDNNSETPGEMNKR).

It belongs to the opioid neuropeptide precursor family. Post-translationally, the N-terminal domain contains 6 conserved cysteines thought to be involved in disulfide bonding and/or processing.

It localises to the secreted. Its function is as follows. Enkephalin neuropeptides compete with and mimic the effects of opiate drugs. They play a role in a number of physiologic functions, including pain perception and responses to stress. The sequence is that of Proenkephalin-A-B (penk-b) from Xenopus laevis (African clawed frog).